Here is a 251-residue protein sequence, read N- to C-terminus: Triosephosphate isomerase (251 aa).

Substrate is bound at residue 9-11 (NWK). H95 functions as the Electrophile in the catalytic mechanism. Catalysis depends on E167, which acts as the Proton acceptor. Substrate is bound by residues G173, S213, and 234–235 (GG).

It belongs to the triosephosphate isomerase family. In terms of assembly, homodimer.

The protein localises to the cytoplasm. It catalyses the reaction D-glyceraldehyde 3-phosphate = dihydroxyacetone phosphate. Its pathway is carbohydrate biosynthesis; gluconeogenesis. It functions in the pathway carbohydrate degradation; glycolysis; D-glyceraldehyde 3-phosphate from glycerone phosphate: step 1/1. Its function is as follows. Involved in the gluconeogenesis. Catalyzes stereospecifically the conversion of dihydroxyacetone phosphate (DHAP) to D-glyceraldehyde-3-phosphate (G3P). This chain is Triosephosphate isomerase, found in Citrifermentans bemidjiense (strain ATCC BAA-1014 / DSM 16622 / JCM 12645 / Bem) (Geobacter bemidjiensis).